The following is a 209-amino-acid chain: Ion-translocating oxidoreductase complex subunit G (209 aa).

Residues 9-29 (GLVLAIFACASTGLVAVTHYL) traverse the membrane as a helical segment. Thr-175 bears the FMN phosphoryl threonine mark.

Belongs to the RnfG family. In terms of assembly, the complex is composed of six subunits: RnfA, RnfB, RnfC, RnfD, RnfE and RnfG. It depends on FMN as a cofactor.

The protein localises to the cell inner membrane. In terms of biological role, part of a membrane-bound complex that couples electron transfer with translocation of ions across the membrane. The protein is Ion-translocating oxidoreductase complex subunit G of Vibrio atlanticus (strain LGP32) (Vibrio splendidus (strain Mel32)).